The primary structure comprises 1820 residues: Sodium channel protein (1820 aa).

Topologically, residues 1–117 (MARKFSSARP…FNPIRRGAIR (117 aa)) are cytoplasmic. One copy of the I repeat lies at 108-410 (FNPIRRGAIR…VAMAYEEQNQ (303 aa)). A helical transmembrane segment spans residues 118–138 (VFVNSAFNFFIMFTIFSNCIF). Topologically, residues 139-149 (MTISNPPAWSK) are extracellular. A helical transmembrane segment spans residues 150–171 (IVEYTFTGIYTFEVIVKVLSRG). The Cytoplasmic segment spans residues 172 to 176 (FCIGH). Residues 177 to 197 (FTFLRDPWNWLDFSVVTMTYI) form a helical membrane-spanning segment. The Extracellular portion of the chain corresponds to 198–203 (TEFIDL). Residues 204–224 (RNVSALRTFRVLRALKTITIF) traverse the membrane as a helical; Voltage-sensor segment. Topologically, residues 225 to 243 (PGLKTIVRALIESMKQMGD) are cytoplasmic. The helical transmembrane segment at 244–264 (VVILTVFSLAVFTLAGMQLFM) threads the bilayer. At 265–346 (GNLRHKCIRW…PNYGYTNYDN (82 aa)) the chain is on the extracellular side. An intrachain disulfide couples C271 to C324. N278, N288, and N317 each carry an N-linked (GlcNAc...) asparagine glycan. Residues 285 to 342 (SAYNTTFDFTAYIENEENQYFLDGALDALLCGNNSDAGKCPEGYTCMKAGRNPNYGYT) are non-homologous region of repeat I. The segment at residues 347 to 371 (FAWTFLCLFRLMLQDYWENLYQMTL) is an intramembrane region (pore-forming). Residues 372 to 378 (RAAGKSY) are Extracellular-facing. Residues 379–402 (MVFFIMVIFLGSFYLINLILAVVA) form a helical membrane-spanning segment. The Cytoplasmic segment spans residues 403-557 (MAYEEQNQAT…CCGPWVFLKK (155 aa)). Residues 483-507 (SVKLSTEEQRSDSKSMDSKHSVDKP) are disordered. Basic and acidic residues predominate over residues 487 to 507 (STEEQRSDSKSMDSKHSVDKP). The stretch at 548–811 (CCGPWVFLKK…EEDDEVNSLQ (264 aa)) is one II repeat. The helical transmembrane segment at 558-578 (WVHFVMMDPFTDLFITLCIIL) threads the bilayer. Residues 579-599 (NTLFMSIEHHPMNESFQSLLS) are Extracellular-facing. A glycan (N-linked (GlcNAc...) asparagine) is linked at N591. The chain crosses the membrane as a helical span at residues 600-620 (AGNLVFTTIFAAEMVLKIIAL). The Cytoplasmic segment spans residues 621–625 (DPYYY). The chain crosses the membrane as a helical span at residues 626–643 (FQQTWNIFDSIIVSLSLL). Over 644-650 (ELGLSNM) the chain is Extracellular. Residues 651 to 671 (QGMSVLRSLRLLRIFKLAKSW) traverse the membrane as a helical; Voltage-sensor segment. At 672–690 (PTLNILIKIICNSVGALGN) the chain is on the cytoplasmic side. The helical transmembrane segment at 691–711 (LTIVLAIIVFIFALVGFQLFG) threads the bilayer. The Extracellular portion of the chain corresponds to 712 to 734 (KNYKEYVCKISDDCELPRWHMND). The segment at residues 735 to 755 (FFHSFLIVFRALCGEWIETMW) is an intramembrane region (pore-forming). At 756–766 (DCMEVGGVPMC) the chain is on the extracellular side. C757 and C766 are joined by a disulfide. A helical transmembrane segment spans residues 767 to 790 (LAVYMMVIIIGNLVMLNLFLALLL). The Cytoplasmic segment spans residues 791–1004 (SSFSSDNLSS…TIVEHDYFET (214 aa)). 2 disordered regions span residues 844–864 (PPSDDVVGEEGDNEGKKDTLP) and 891–959 (VKGE…SKDP). Over residues 896-910 (EIEEEGLVDSSDEED) the composition is skewed to acidic residues. Polar residues predominate over residues 924 to 935 (SVCSTVDYSPSE). The span at 942–953 (EEEEEEEEEPEE) shows a compositional bias: acidic residues. One copy of the III repeat lies at 988-1295 (NLRRTCYTIV…KKYYNAMKKL (308 aa)). The helical transmembrane segment at 1005 to 1025 (FIIFMILLSSGVLAFEDIYIW) threads the bilayer. Residues 1026 to 1037 (RRRVIKVILEYA) lie on the Extracellular side of the membrane. The helical transmembrane segment at 1038-1058 (DKVFTYVFIVEMLLKWVAYGF) threads the bilayer. Residues 1059 to 1065 (KRYFTDA) are Cytoplasmic-facing. The chain crosses the membrane as a helical span at residues 1066-1086 (WCWLDFVIVGASIMGITSSLL). At 1087-1091 (GYEEL) the chain is on the extracellular side. Residues 1092 to 1112 (GAIKNLRTIRALRPLRALSRF) traverse the membrane as a helical; Voltage-sensor segment. Over 1113–1131 (EGMKVVVRALLGAIPSIMN) the chain is Cytoplasmic. The chain crosses the membrane as a helical span at residues 1132–1152 (VLLVCLMFWLIFSIMGVNLFA). The Extracellular segment spans residues 1153-1199 (GKFYRCINTTTDEILPVEEVNNRSDCMALMYTNEVRWVNLKVNYDNA). N1160 and N1174 each carry an N-linked (GlcNAc...) asparagine glycan. The interval 1172–1194 (VNNRSDCMALMYTNEVRWVNLKV) is non-homologous region of repeat III. The segment at residues 1200–1221 (GMGYLSLLQVSTFKGWMDIMYA) is an intramembrane region (pore-forming). At 1222 to 1243 (AVDSREVEDQPIYEINVYMYLY) the chain is on the extracellular side. Residues 1244–1264 (FVIFIVFGAFFTLNLFIGVII) form a helical membrane-spanning segment. At 1265–1320 (DNFNRQKQKLGGEDLFMTEEQKKYYNAMKKLGSKKAAKCIPRPSNVVQGVVYDIVT) the chain is on the cytoplasmic side. One copy of the IV repeat lies at 1304–1602 (IPRPSNVVQG…WHKFDVHGTQ (299 aa)). The helical transmembrane segment at 1321–1341 (QPFTDIFIMALICINMVAMMV) threads the bilayer. The Extracellular segment spans residues 1342 to 1352 (ESEDQSQVKKD). Residues 1353-1376 (ILSQINVIFVIIFTVECLLKLLAL) form a helical membrane-spanning segment. Residues 1377–1380 (RQYF) are Cytoplasmic-facing. The chain crosses the membrane as a helical span at residues 1381-1398 (FTVGWNVFDFAVVVISII). At 1399–1416 (GLLLSDIIEKYFVSPTLF) the chain is on the extracellular side. Residues 1417–1437 (RVIRLARIARVLRLIRAAKGI) form a helical; Voltage-sensor membrane-spanning segment. The Cytoplasmic segment spans residues 1438–1453 (RTLLFALMMSLPALFN). Residues 1454–1474 (IGLLLFLIMFIFSIFGMSNFA) traverse the membrane as a helical segment. Topologically, residues 1475 to 1490 (YVKKQGGVDDIFNFET) are extracellular. The segment at 1490-1505 (TFGNSMICLFEITTSA) is non-homologous region of repeat IV. Positions 1491–1513 (FGNSMICLFEITTSAGWDGLLLP) form an intramembrane region, pore-forming. Over 1514–1543 (TLNTGPPDCDPDVENPGTDVRGNCGNPGKG) the chain is Extracellular. Residues 1544–1567 (ITFFCSYIILSFLVVVNMYIAIIL) form a helical membrane-spanning segment. Over 1568–1820 (ENFGVAQEES…GAIVVRESIV (253 aa)) the chain is Cytoplasmic.

Belongs to the sodium channel (TC 1.A.1.10) family.

The protein localises to the cell membrane. Functionally, mediates the voltage-dependent sodium ion permeability of excitable membranes. Assuming opened or closed conformations in response to the voltage difference across the membrane, the protein forms a sodium-selective channel through which Na(+) ions may pass in accordance with their electrochemical gradient. This chain is Sodium channel protein, found in Electrophorus electricus (Electric eel).